Consider the following 273-residue polypeptide: E3 ubiquitin-protein ligase SDIR1 (273 aa).

Topologically, residues 1-33 (MSFVFRGSRGDLESGFSGGFLPERRAMRVHGAR) are cytoplasmic. A helical membrane pass occupies residues 34-54 (PVNSNSLAFLVTVLLLFMILN). The Lumenal segment spans residues 55–56 (SH). A helical transmembrane segment spans residues 57–77 (QMPPNFLLWLVLGVFLMATTL). Over 78-273 (RMYATCQQLQ…EIDDDASDMV (196 aa)) the chain is Cytoplasmic. The RING-type; atypical zinc-finger motif lies at 211–252 (CSVCLEQVTVGEIVRTLPCLHQFHAGCIDPWLRQQGTCPVCK).

In terms of assembly, interacts with ATP1/SDIRIP1. In terms of tissue distribution, ubiquitous.

Its subcellular location is the endoplasmic reticulum membrane. The catalysed reaction is S-ubiquitinyl-[E2 ubiquitin-conjugating enzyme]-L-cysteine + [acceptor protein]-L-lysine = [E2 ubiquitin-conjugating enzyme]-L-cysteine + N(6)-ubiquitinyl-[acceptor protein]-L-lysine.. Functionally, E3 ubiquitin-protein ligase that acts as a positive regulator of abscisic acid-related stress signal transduction. Interacts with and ubiquitinates ATP1/SDIRIP1 to modulate ATP1/SDIRIP1 stability through the 26S proteasome pathway. Regulates abscisic acid (ABA) and salt stress responses by negatively affecting ATP1/SDIRIP1 stability. The SDIR1-ATP1/SDIRIP1 complex plays an important role in ABA signaling through the ubiquitination pathway. The sequence is that of E3 ubiquitin-protein ligase SDIR1 from Arabidopsis thaliana (Mouse-ear cress).